A 691-amino-acid chain; its full sequence is Elongation factor G (691 aa).

The region spanning 12-286 (KKLRNIGIMA…GILEYLPSPL (275 aa)) is the tr-type G domain. Residues 21 to 28 (AHIDAGKT), 85 to 89 (DTPGH), and 139 to 142 (NKMD) each bind GTP.

This sequence belongs to the TRAFAC class translation factor GTPase superfamily. Classic translation factor GTPase family. EF-G/EF-2 subfamily.

The protein localises to the cytoplasm. Its function is as follows. Catalyzes the GTP-dependent ribosomal translocation step during translation elongation. During this step, the ribosome changes from the pre-translocational (PRE) to the post-translocational (POST) state as the newly formed A-site-bound peptidyl-tRNA and P-site-bound deacylated tRNA move to the P and E sites, respectively. Catalyzes the coordinated movement of the two tRNA molecules, the mRNA and conformational changes in the ribosome. This chain is Elongation factor G, found in Thermosipho africanus (strain TCF52B).